The primary structure comprises 175 residues: Ribulose bisphosphate carboxylase small subunit, chloroplastic (175 aa).

The transit peptide at 1 to 46 (MAPTVMASSATSVAPFQGLKSTAGLPVSRRSNGASLGSVSNGGRIR) directs the protein to the chloroplast.

Belongs to the RuBisCO small chain family. Heterohexadecamer of 8 large and 8 small subunits.

It localises to the plastid. The protein localises to the chloroplast. RuBisCO catalyzes two reactions: the carboxylation of D-ribulose 1,5-bisphosphate, the primary event in carbon dioxide fixation, as well as the oxidative fragmentation of the pentose substrate. Both reactions occur simultaneously and in competition at the same active site. Although the small subunit is not catalytic it is essential for maximal activity. This chain is Ribulose bisphosphate carboxylase small subunit, chloroplastic, found in Aegilops tauschii (Tausch's goatgrass).